Here is a 461-residue protein sequence, read N- to C-terminus: Hydroxyproline dehydrogenase (461 aa).

Lys310 carries the N6-acetyllysine modification.

This sequence belongs to the proline oxidase family. The cofactor is FAD.

The catalysed reaction is trans-4-hydroxy-L-proline + a quinone = (3R,5S)-1-pyrroline-3-hydroxy-5-carboxylate + a quinol + H(+). It catalyses the reaction L-proline + a quinone = (S)-1-pyrroline-5-carboxylate + a quinol + H(+). Its pathway is amino-acid degradation; L-proline degradation into L-glutamate; L-glutamate from L-proline: step 1/2. Functionally, dehydrogenase that converts trans-4-L-hydroxyproline to delta-1-pyrroline-3-hydroxy-5-carboxylate (Hyp) using ubiquinone-10 as the terminal electron acceptor. Can also use proline as a substrate but with a very much lower efficiency. Does not react with other diastereomers of Hyp: trans-4-D-hydroxyproline and cis-4-L-hydroxyproline. Ubiquininone analogs such as menadione, duroquinone and ubiquinone-1 react more efficiently than oxygen as the terminal electron acceptor during catalysis. The polypeptide is Hydroxyproline dehydrogenase (Bos taurus (Bovine)).